The following is a 57-amino-acid chain: DNA-directed RNA polymerase subunit Rpo6 (57 aa).

This sequence belongs to the archaeal Rpo6/eukaryotic RPB6 RNA polymerase subunit family. In terms of assembly, part of the RNA polymerase complex.

It localises to the cytoplasm. The catalysed reaction is RNA(n) + a ribonucleoside 5'-triphosphate = RNA(n+1) + diphosphate. In terms of biological role, DNA-dependent RNA polymerase (RNAP) catalyzes the transcription of DNA into RNA using the four ribonucleoside triphosphates as substrates. This is DNA-directed RNA polymerase subunit Rpo6 from Thermococcus gammatolerans (strain DSM 15229 / JCM 11827 / EJ3).